Here is a 403-residue protein sequence, read N- to C-terminus: Acetate kinase (403 aa).

A Mg(2+)-binding site is contributed by asparagine 7. Lysine 14 is a binding site for ATP. Arginine 90 serves as a coordination point for substrate. Aspartate 147 functions as the Proton donor/acceptor in the catalytic mechanism. ATP is bound by residues 207–211 (HIGNG), 283–285 (DMR), and 331–335 (GVGEN). Residue glutamate 386 coordinates Mg(2+).

Belongs to the acetokinase family. Homodimer. The cofactor is Mg(2+). It depends on Mn(2+) as a cofactor.

It localises to the cytoplasm. It catalyses the reaction acetate + ATP = acetyl phosphate + ADP. Its pathway is metabolic intermediate biosynthesis; acetyl-CoA biosynthesis; acetyl-CoA from acetate: step 1/2. In terms of biological role, catalyzes the formation of acetyl phosphate from acetate and ATP. Can also catalyze the reverse reaction. The polypeptide is Acetate kinase (Thermotoga petrophila (strain ATCC BAA-488 / DSM 13995 / JCM 10881 / RKU-1)).